The primary structure comprises 444 residues: Ribulose bisphosphate carboxylase large chain (444 aa).

Lys-5 is modified (N6,N6,N6-trimethyllysine). Substrate is bound by residues Asn-114 and Thr-164. Lys-166 acts as the Proton acceptor in catalysis. Residue Lys-168 coordinates substrate. Mg(2+) contacts are provided by Lys-192, Asp-194, and Glu-195. N6-carboxylysine is present on Lys-192. Catalysis depends on His-285, which acts as the Proton acceptor. 3 residues coordinate substrate: Arg-286, His-318, and Ser-370.

The protein belongs to the RuBisCO large chain family. Type I subfamily. As to quaternary structure, heterohexadecamer of 8 large chains and 8 small chains; disulfide-linked. The disulfide link is formed within the large subunit homodimers. It depends on Mg(2+) as a cofactor. Post-translationally, the disulfide bond which can form in the large chain dimeric partners within the hexadecamer appears to be associated with oxidative stress and protein turnover.

It localises to the plastid. The protein resides in the chloroplast. The enzyme catalyses 2 (2R)-3-phosphoglycerate + 2 H(+) = D-ribulose 1,5-bisphosphate + CO2 + H2O. It catalyses the reaction D-ribulose 1,5-bisphosphate + O2 = 2-phosphoglycolate + (2R)-3-phosphoglycerate + 2 H(+). RuBisCO catalyzes two reactions: the carboxylation of D-ribulose 1,5-bisphosphate, the primary event in carbon dioxide fixation, as well as the oxidative fragmentation of the pentose substrate in the photorespiration process. Both reactions occur simultaneously and in competition at the same active site. The polypeptide is Ribulose bisphosphate carboxylase large chain (Botrychium strictum (Fern)).